We begin with the raw amino-acid sequence, 686 residues long: Methionine--tRNA ligase (686 aa).

The short motif at 13–23 (PYANGQIHIGH) is the 'HIGH' region element. Zn(2+) is bound by residues cysteine 144, cysteine 147, cysteine 157, and cysteine 160. The 'KMSKS' region signature appears at 335–339 (KMSKS). Lysine 338 contacts ATP. The tRNA-binding domain maps to 580–686 (DFAKVDLRVA…EGAVPGMRIG (107 aa)).

Belongs to the class-I aminoacyl-tRNA synthetase family. MetG type 1 subfamily. In terms of assembly, homodimer. Zn(2+) is required as a cofactor.

The protein resides in the cytoplasm. It carries out the reaction tRNA(Met) + L-methionine + ATP = L-methionyl-tRNA(Met) + AMP + diphosphate. In terms of biological role, is required not only for elongation of protein synthesis but also for the initiation of all mRNA translation through initiator tRNA(fMet) aminoacylation. The polypeptide is Methionine--tRNA ligase (Cupriavidus necator (strain ATCC 17699 / DSM 428 / KCTC 22496 / NCIMB 10442 / H16 / Stanier 337) (Ralstonia eutropha)).